Here is a 462-residue protein sequence, read N- to C-terminus: Glycine--tRNA ligase (462 aa).

Arg100 and Glu170 together coordinate substrate. ATP contacts are provided by residues 202–204 (RNE), 212–217 (FRTREF), 287–288 (EL), and 331–334 (GVER). 217-221 (FEQME) is a substrate binding site. 327 to 331 (EPSVG) contacts substrate.

The protein belongs to the class-II aminoacyl-tRNA synthetase family. In terms of assembly, homodimer.

It localises to the cytoplasm. It carries out the reaction tRNA(Gly) + glycine + ATP = glycyl-tRNA(Gly) + AMP + diphosphate. Catalyzes the attachment of glycine to tRNA(Gly). The protein is Glycine--tRNA ligase of Malacoplasma penetrans (strain HF-2) (Mycoplasma penetrans).